Here is a 1368-residue protein sequence, read N- to C-terminus: DNA-directed RNA polymerase subunit beta (1368 aa).

This sequence belongs to the RNA polymerase beta chain family. The RNAP catalytic core consists of 2 alpha, 1 beta, 1 beta' and 1 omega subunit. When a sigma factor is associated with the core the holoenzyme is formed, which can initiate transcription.

The enzyme catalyses RNA(n) + a ribonucleoside 5'-triphosphate = RNA(n+1) + diphosphate. Its function is as follows. DNA-dependent RNA polymerase catalyzes the transcription of DNA into RNA using the four ribonucleoside triphosphates as substrates. The sequence is that of DNA-directed RNA polymerase subunit beta from Burkholderia thailandensis (strain ATCC 700388 / DSM 13276 / CCUG 48851 / CIP 106301 / E264).